Reading from the N-terminus, the 506-residue chain is DNA polymerase type-X family protein pol4 (506 aa).

Positions 1 to 98 (MKILASSTNY…TPGNPYVIWH (98 aa)) constitute a BRCT domain. The interval 106–150 (GSPYTPSTRPASHTEAPNDFENHETPNTENNNEVKSIDNVDQEGS) is disordered. The tract at residues 348–357 (RGKPVGADVD) is involved in ssDNA binding. The Mg(2+) site is built by aspartate 355, aspartate 357, and aspartate 419.

It belongs to the DNA polymerase type-X family. Mg(2+) serves as cofactor.

It is found in the cytoplasm. Its subcellular location is the nucleus. The enzyme catalyses DNA(n) + a 2'-deoxyribonucleoside 5'-triphosphate = DNA(n+1) + diphosphate. Repair polymerase. Involved in gap-filling in DNA non-homologous end joining (NHEJ) required for double-strand break repair. Can incorporate a ribonucleotide (rNTP) into a primer DNA. The polypeptide is DNA polymerase type-X family protein pol4 (pol4) (Schizosaccharomyces pombe (strain 972 / ATCC 24843) (Fission yeast)).